The following is an 870-amino-acid chain: S-linalool synthase (870 aa).

The Mg(2+) site is built by D547, D551, N689, S693, and E697. The DDXXD motif motif lies at 547–551; that stretch reads DDFFD.

This sequence belongs to the terpene synthase family. Requires Mg(2+) as cofactor. It depends on Mn(2+) as a cofactor. Highly expressed in cells of the transmitting tract of the stigma and style and in the epidermal cells of petals, as well as in stamens.

The catalysed reaction is (2E)-geranyl diphosphate + H2O = (S)-linalool + diphosphate. In terms of biological role, involved in the biosynthesis of the acyclic monoterpene S-linalool, a major component of the strong sweet scent of the C.breweri flowers. In Clarkia breweri (Fairy fans), this protein is S-linalool synthase (LIS).